Here is a 190-residue protein sequence, read N- to C-terminus: Inosine triphosphate pyrophosphatase (190 aa).

Residue 9-14 (TGNAKK) participates in ITP binding. Glutamate 39 is a binding site for Mg(2+). Residues lysine 51, 67–68 (DT), lysine 84, 144–147 (FGWD), lysine 167, and 172–173 (HR) contribute to the ITP site.

It belongs to the HAM1 NTPase family. Homodimer. Mg(2+) is required as a cofactor. Requires Mn(2+) as cofactor.

It is found in the cytoplasm. It catalyses the reaction ITP + H2O = IMP + diphosphate + H(+). The catalysed reaction is dITP + H2O = dIMP + diphosphate + H(+). The enzyme catalyses XTP + H2O = XMP + diphosphate + H(+). Functionally, pyrophosphatase that hydrolyzes non-canonical purine nucleotides such as inosine triphosphate (ITP), deoxyinosine triphosphate (dITP) or xanthosine 5'-triphosphate (XTP) to their respective monophosphate derivatives. The enzyme does not distinguish between the deoxy- and ribose forms. Probably excludes non-canonical purines from RNA and DNA precursor pools, thus preventing their incorporation into RNA and DNA and avoiding chromosomal lesions. The chain is Inosine triphosphate pyrophosphatase from Pediculus humanus subsp. corporis (Body louse).